The chain runs to 275 residues: Nitrogenase iron protein 1 (275 aa).

9–16 (GKGGIGKS) lines the ATP pocket. C98 lines the [4Fe-4S] cluster pocket. At R101 the chain carries ADP-ribosylarginine; by dinitrogenase reductase ADP-ribosyltransferase. C132 is a [4Fe-4S] cluster binding site.

This sequence belongs to the NifH/BchL/ChlL family. In terms of assembly, homodimer. The cofactor is [4Fe-4S] cluster. Post-translationally, the reversible ADP-ribosylation of Arg-101 inactivates the nitrogenase reductase and regulates nitrogenase activity.

It carries out the reaction N2 + 8 reduced [2Fe-2S]-[ferredoxin] + 16 ATP + 16 H2O = H2 + 8 oxidized [2Fe-2S]-[ferredoxin] + 2 NH4(+) + 16 ADP + 16 phosphate + 6 H(+). In terms of biological role, the key enzymatic reactions in nitrogen fixation are catalyzed by the nitrogenase complex, which has 2 components: the iron protein and the molybdenum-iron protein. This is Nitrogenase iron protein 1 (nifH1) from Methanobacterium ivanovii.